Reading from the N-terminus, the 875-residue chain is Phospholipase DDHD1 (875 aa).

3 disordered regions span residues 1-30 (MNYP…LGSD), 101-153 (LRYY…GAAA), and 206-231 (RAQD…SVED). S8 and S11 each carry phosphoserine. Residues 130–140 (SGGGGAAGGGP) are compositionally biased toward gly residues. Residues 217 to 228 (GPASPAGPASSS) show a composition bias toward low complexity. The active site involves S540. In terms of domain architecture, DDHD spans 614-861 (LKFKVENFFC…ALFLLTFMYK (248 aa)). Position 726 is a phosphoserine (S726). The tract at residues 770-804 (RSSASQPSETSRDSIEDEKKPVASPPMTTVATQTL) is disordered. Residues 779-790 (TSRDSIEDEKKP) show a composition bias toward basic and acidic residues. Polar residues predominate over residues 795–804 (PMTTVATQTL).

The protein belongs to the PA-PLA1 family. Forms homooligomers and, to a much smaller extent, heterooligomers with DDHD2. Interacts with SEC23A and SEC24C. As to expression, expressed in mature testis.

It localises to the cytoplasm. It catalyses the reaction a 1,2-diacyl-sn-glycero-3-phosphate + H2O = a 2-acyl-sn-glycerol 3-phosphate + a fatty acid + H(+). The catalysed reaction is a 1,2-diacyl-sn-glycero-3-phospho-(1D-myo-inositol) + H2O = a 2-acyl-sn-glycero-3-phospho-D-myo-inositol + a fatty acid + H(+). It carries out the reaction 1-octadecanoyl-2-(5Z,8Z,11Z,14Z-eicosatetraenoyl)-sn-glycero-3-phospho-(1D-myo-inositol) + H2O = 2-(5Z,8Z,11Z,14Z-eicosatetraenoyl)-sn-glycero-3-phospho-(1D-myo-inositol) + octadecanoate + H(+). The enzyme catalyses a 1-acyl-2-(5Z,8Z,11Z,14Z-eicosatetraenoyl)-sn-glycero-3-phospho-(1D-myo-inositol) + H2O = 2-(5Z,8Z,11Z,14Z-eicosatetraenoyl)-sn-glycero-3-phospho-(1D-myo-inositol) + a fatty acid + H(+). It catalyses the reaction 1,2-dihexadecanoyl-sn-glycero-3-phospho-(1D-myo-inositol) + H2O = 2-hexadecanoyl-sn-glycero-3-phospho-(1D-myo-inositol) + hexadecanoate + H(+). The catalysed reaction is 1,2-di-(9Z-octadecenoyl)-sn-glycero-3-phosphate + H2O = 2-(9Z-octadecenoyl)-sn-glycero-3-phosphate + (9Z)-octadecenoate + H(+). It carries out the reaction a 1-acyl-2-(5Z,8Z,11Z,14Z)-eicosatetraenoyl-sn-glycero-3-phosphate + H2O = 2-(5Z,8Z,11Z,14Z-eicosatetraenoyl)-sn-glycero-3-phosphate + a fatty acid + H(+). The enzyme catalyses 1-hexadecanoyl-2-(9Z-octadecenoyl)-sn-glycero-3-phosphate + H2O = 2-(9Z-octadecenoyl)-sn-glycero-3-phosphate + hexadecanoate + H(+). It catalyses the reaction 1-hexadecanoyl-2-(9Z-octadecenoyl)-sn-glycero-3-phospho-L-serine + H2O = 2-(9Z-octadecenoyl)-sn-glycero-3-phospho-L-serine + hexadecanoate + H(+). The catalysed reaction is 1,2-di-(5Z,8Z,11Z,14Z)-eicosatetraenoyl-sn-glycero-3-phosphate + H2O = 2-(5Z,8Z,11Z,14Z-eicosatetraenoyl)-sn-glycero-3-phosphate + (5Z,8Z,11Z,14Z)-eicosatetraenoate + H(+). It carries out the reaction 1-octadecanoyl-2-(5Z,8Z,11Z,14Z-eicosatetraenoyl)-sn-glycero-3-phosphate + H2O = 2-(5Z,8Z,11Z,14Z-eicosatetraenoyl)-sn-glycero-3-phosphate + octadecanoate + H(+). The enzyme catalyses a 1,2-diacyl-sn-glycero-3-phosphocholine + H2O = a 2-acyl-sn-glycero-3-phosphocholine + a fatty acid + H(+). It catalyses the reaction a 1,2-diacyl-sn-glycero-3-phosphoethanolamine + H2O = a 2-acyl-sn-glycero-3-phosphoethanolamine + a fatty acid + H(+). The catalysed reaction is a 1,2-diacyl-sn-glycero-3-phospho-L-serine + H2O = a 2-acyl-sn-glycero-3-phospho-L-serine + a fatty acid + H(+). It carries out the reaction a 1,2-diacyl-sn-glycero-3-phospho-(1'-sn-glycerol) + H2O = 2-acyl-sn-glycero-3-phospho-(1'-sn-glycerol) + a fatty acid + H(+). The enzyme catalyses 1-hexadecanoyl-2-(9Z-octadecenoyl)-sn-glycero-3-phospho-(1'-sn-glycerol) + H2O = 2-(9Z-octadecenoyl)-sn-glycero-3-phospho-(1'-sn-glycerol) + hexadecanoate + H(+). It catalyses the reaction 1-acyl-2-(5Z,8Z,11Z,14Z-eicosatetraenoyl)-sn-glycero-3-phosphocholine + H2O = 2-(5Z,8Z,11Z,14Z)-eicosatetraenoyl-sn-glycero-3-phosphocholine + a fatty acid + H(+). The catalysed reaction is 1-acyl-2-(5Z,8Z,11Z,14Z)-eicosatetraenoyl-sn-glycero-3-phosphoethanolamine + H2O = 2-(5Z,8Z,11Z,14Z)-eicosatetraenoyl-sn-glycero-3-phosphoethanolamine + a fatty acid + H(+). It carries out the reaction 1-(9Z-octadecenoyl)-2-(7Z,10Z,13Z,16Z,19Z-docosapentaenoyl)-sn-glycero-3-phospho-1D-myo-inositol + H2O = 2-(7Z,10Z,13Z,16Z,19Z-docosapentaenoyl)-sn-glycero-3-phospho-1D-myo-inositol + (9Z)-octadecenoate + H(+). The enzyme catalyses 1-(9Z-octadecenoyl)-2-(5Z,8Z,11Z,14Z-eicosatetraenoyl)-sn-glycero-3-phospho-1D-myo-inositol + H2O = 2-(5Z,8Z,11Z,14Z-eicosatetraenoyl)-sn-glycero-3-phospho-(1D-myo-inositol) + (9Z)-octadecenoate + H(+). It catalyses the reaction 1,2-di-(9Z-octadecenoyl)-sn-glycero-3-phospho-1D-myo-inositol + H2O = 2-(9Z-octadecenoyl)-sn-glycero-3-phospho-1D-myo-inositol + (9Z)-octadecenoate + H(+). The catalysed reaction is 1-(9Z-octadecenoyl)-2-(8Z,11Z,14Z-eicosatrienoyl)-sn-glycero-3-phospho-1D-myo-inositol + H2O = 2-(8Z,11Z,14Z-eicosatrienoyl)-sn-glycero-3-phospho-1D-myo-inositol + (9Z)-octadecenoate + H(+). It carries out the reaction 1,2-di-(9Z-octadecenoyl)-sn-glycero-3-phosphocholine + H2O = (9Z-octadecenoyl)-sn-glycero-3-phosphocholine + (9Z)-octadecenoate + H(+). Its pathway is phospholipid metabolism; phosphatidylinositol metabolism. Its function is as follows. Phospholipase A1 (PLA1) that hydrolyzes ester bonds at the sn-1 position of glycerophospholipids producing a free fatty acid and a lysophospholipid. Prefers phosphatidate (1,2-diacyl-sn-glycero-3-phosphate, PA) as substrate in vitro, but can efficiently hydrolyze phosphatidylinositol (1,2-diacyl-sn-glycero-3-phospho-(1D-myo-inositol), PI), as well as a range of other glycerophospholipid substrates such as phosphatidylcholine (1,2-diacyl-sn-glycero-3-phosphocholine, PC), phosphatidylethanolamine (1,2-diacyl-sn-glycero-3-phosphoethanolamine, PE), phosphatidylserine (1,2-diacyl-sn-glycero-3-phospho-L-serine, PS) and phosphatidylglycerol (1,2-diacyl-sn-glycero-3-phospho-(1'-sn-glycerol), PG). Involved in the regulation of the endogenous content of polyunsaturated PI and PS lipids in the nervous system. Changes in these lipids extend to downstream metabolic products like PI phosphates PIP and PIP2, which play fundamental roles in cell biology. Regulates mitochondrial morphology. These dynamic changes may be due to PA hydrolysis at the mitochondrial surface. May play a regulatory role in spermatogenesis or sperm function. The protein is Phospholipase DDHD1 (DDHD1) of Bos taurus (Bovine).